The primary structure comprises 235 residues: U1 small nuclear ribonucleoprotein C (235 aa).

The segment at Tyr-4–Glu-36 adopts a Matrin-type zinc-finger fold. The disordered stretch occupies residues Gln-131 to Ser-235. A compositionally biased stretch (low complexity) spans Asn-134–Asn-168. Residues Met-169–Glu-189 show a composition bias toward basic and acidic residues. Residues Pro-192 to Asn-203 show a composition bias toward low complexity. Composition is skewed to basic and acidic residues over residues Ser-205–Lys-217 and Asn-225–Ser-235.

The protein belongs to the U1 small nuclear ribonucleoprotein C family. In terms of assembly, U1 snRNP is composed of the 7 core Sm proteins B/B', D1, D2, D3, E, F and G that assemble in a heptameric protein ring on the Sm site of the small nuclear RNA to form the core snRNP, and at least 3 U1 snRNP-specific proteins U1-70K, U1-A and U1-C. U1-C interacts with U1 snRNA and the 5' splice-site region of the pre-mRNA.

The protein resides in the nucleus. Its function is as follows. Component of the spliceosomal U1 snRNP, which is essential for recognition of the pre-mRNA 5' splice-site and the subsequent assembly of the spliceosome. U1-C is directly involved in initial 5' splice-site recognition for both constitutive and regulated alternative splicing. The interaction with the 5' splice-site seems to precede base-pairing between the pre-mRNA and the U1 snRNA. Stimulates commitment or early (E) complex formation by stabilizing the base pairing of the 5' end of the U1 snRNA and the 5' splice-site region. In Plasmodium falciparum (isolate 3D7), this protein is U1 small nuclear ribonucleoprotein C.